The sequence spans 252 residues: Trans-aconitate 2-methyltransferase (252 aa).

It belongs to the methyltransferase superfamily. Tam family.

It localises to the cytoplasm. It catalyses the reaction trans-aconitate + S-adenosyl-L-methionine = (E)-3-(methoxycarbonyl)pent-2-enedioate + S-adenosyl-L-homocysteine. Catalyzes the S-adenosylmethionine monomethyl esterification of trans-aconitate. The protein is Trans-aconitate 2-methyltransferase of Escherichia coli O139:H28 (strain E24377A / ETEC).